Here is a 439-residue protein sequence, read N- to C-terminus: Chitinase-like protein Idgf1 (439 aa).

The signal sequence occupies residues 1–20 (MRFQLFYILGLLSVTSLTHA). Positions 22 to 439 (SNLICYYDSN…ILRSIKYFMG (418 aa)) constitute a GH18 domain. Residues Cys26 and Cys53 are joined by a disulfide bond. N-linked (GlcNAc...) asparagine glycosylation is found at Asn122, Asn218, and Asn346. An intrachain disulfide couples Cys340 to Cys423.

It belongs to the glycosyl hydrolase 18 family. IDGF subfamily. In terms of tissue distribution, primarily expressed in yolk cells and fat body. In larvae, it is expressed in large salivary gland cells and weakly expressed in imaginal disks. Less expressed than Idgf2 and Idgf4.

It is found in the secreted. Cooperates with insulin-like peptides to stimulate the proliferation, polarization and motility of imaginal disk cells. May act by stabilizing the binding of insulin-like peptides to its receptor through a simultaneous interaction with both molecules to form a multiprotein signaling complex. This is Chitinase-like protein Idgf1 (Idgf1) from Drosophila melanogaster (Fruit fly).